The following is a 312-amino-acid chain: Acetyl-coenzyme A carboxylase carboxyl transferase subunit alpha (312 aa).

In terms of domain architecture, CoA carboxyltransferase C-terminal spans 36–286 (RLEKEVKSIY…KEYFLDALRT (251 aa)).

This sequence belongs to the AccA family. Acetyl-CoA carboxylase is a heterohexamer composed of biotin carboxyl carrier protein (AccB), biotin carboxylase (AccC) and two subunits each of ACCase subunit alpha (AccA) and ACCase subunit beta (AccD).

The protein localises to the cytoplasm. It catalyses the reaction N(6)-carboxybiotinyl-L-lysyl-[protein] + acetyl-CoA = N(6)-biotinyl-L-lysyl-[protein] + malonyl-CoA. Its pathway is lipid metabolism; malonyl-CoA biosynthesis; malonyl-CoA from acetyl-CoA: step 1/1. Its function is as follows. Component of the acetyl coenzyme A carboxylase (ACC) complex. First, biotin carboxylase catalyzes the carboxylation of biotin on its carrier protein (BCCP) and then the CO(2) group is transferred by the carboxyltransferase to acetyl-CoA to form malonyl-CoA. This chain is Acetyl-coenzyme A carboxylase carboxyl transferase subunit alpha, found in Helicobacter pylori (strain P12).